Here is a 309-residue protein sequence, read N- to C-terminus: Glycine-rich RNA-binding protein 3, mitochondrial (309 aa).

A mitochondrion-targeting transit peptide spans 1–37 (MAFLSKFGNILKQTTNKQLNAQVSLSSPSLFQAIRCM). An RRM domain is found at 40–118 (SKLFIGGMAY…RVVKVNYAND (79 aa)). The disordered stretch occupies residues 247-309 (FAGDSQFGGS…GEFEDVAKRA (63 aa)). Positions 258 to 273 (VGNSSQFGGDNTQFTA) are enriched in polar residues.

Belongs to the GR-RBP family. Homodimer. Interacts with ORRM2 and MORF8/RIP1. Interacts with RBG5/ORRM4. Binds to RBG2/ORRM5.

The protein localises to the mitochondrion. In terms of biological role, possibly has a role in RNA transcription or processing during stress. Involved in C-to-U editing of mitochondrial RNA. Functions as a minor mitochondrial editing factor. Controls 6 percent of the mitochondrial editing sites. The protein is Glycine-rich RNA-binding protein 3, mitochondrial of Arabidopsis thaliana (Mouse-ear cress).